The chain runs to 416 residues: UDP-N-acetylmuramoylalanine--D-glutamate ligase (416 aa).

108–114 is an ATP binding site; the sequence is GTTGKTT.

This sequence belongs to the MurCDEF family.

Its subcellular location is the cytoplasm. The enzyme catalyses UDP-N-acetyl-alpha-D-muramoyl-L-alanine + D-glutamate + ATP = UDP-N-acetyl-alpha-D-muramoyl-L-alanyl-D-glutamate + ADP + phosphate + H(+). The protein operates within cell wall biogenesis; peptidoglycan biosynthesis. Functionally, cell wall formation. Catalyzes the addition of glutamate to the nucleotide precursor UDP-N-acetylmuramoyl-L-alanine (UMA). The protein is UDP-N-acetylmuramoylalanine--D-glutamate ligase of Chlamydia trachomatis serovar L2 (strain ATCC VR-902B / DSM 19102 / 434/Bu).